We begin with the raw amino-acid sequence, 354 residues long: Fusarinine C esterase sidJ (354 aa).

This sequence belongs to the sidJ hydrolase family. Homodimer.

It catalyses the reaction fusarinine C + 3 H2O = 3 fusarinine + Fe(3+). Displays specific fusarinine C (FsC) esterase activity but does not hydrolyze triacetylfusarinine C (TAFC), which has the same core structure as fusarinine C. Both extra- and intracellular siderophores have been shown to be crucial for the virulence. Subsequent to chelation of iron and uptake, FsC and TAFC are hydrolyzed and the iron is transferred to the metabolism or to the intracellular siderophore ferricrocin (FC) for transport and storage of iron. This is Fusarinine C esterase sidJ from Aspergillus fumigatus (strain ATCC MYA-4609 / CBS 101355 / FGSC A1100 / Af293) (Neosartorya fumigata).